The following is a 295-amino-acid chain: 4-hydroxy-tetrahydrodipicolinate synthase (295 aa).

Residue T47 coordinates pyruvate. Y135 (proton donor/acceptor) is an active-site residue. The active-site Schiff-base intermediate with substrate is K163. I204 lines the pyruvate pocket.

It belongs to the DapA family. In terms of assembly, homotetramer; dimer of dimers.

The protein localises to the cytoplasm. It carries out the reaction L-aspartate 4-semialdehyde + pyruvate = (2S,4S)-4-hydroxy-2,3,4,5-tetrahydrodipicolinate + H2O + H(+). It functions in the pathway amino-acid biosynthesis; L-lysine biosynthesis via DAP pathway; (S)-tetrahydrodipicolinate from L-aspartate: step 3/4. In terms of biological role, catalyzes the condensation of (S)-aspartate-beta-semialdehyde [(S)-ASA] and pyruvate to 4-hydroxy-tetrahydrodipicolinate (HTPA). The polypeptide is 4-hydroxy-tetrahydrodipicolinate synthase (Caldicellulosiruptor bescii (strain ATCC BAA-1888 / DSM 6725 / KCTC 15123 / Z-1320) (Anaerocellum thermophilum)).